The primary structure comprises 271 residues: Co-chaperone protein DjlA (271 aa).

Topologically, residues 1–6 (MQYWGK) are periplasmic. A helical transmembrane segment spans residues 7–31 (IIGVAVALLMGGGFWGVVLGLLIGH). Residues 32 to 271 (MFDKARSRKM…ELIKQQKGFK (240 aa)) lie on the Cytoplasmic side of the membrane. The 67-residue stretch at 205–271 (DACNVLGVKP…ELIKQQKGFK (67 aa)) folds into the J domain.

Homodimer.

The protein resides in the cell inner membrane. In terms of biological role, regulatory DnaK co-chaperone. Direct interaction between DnaK and DjlA is needed for the induction of the wcaABCDE operon, involved in the synthesis of a colanic acid polysaccharide capsule, possibly through activation of the RcsB/RcsC phosphotransfer signaling pathway. The colanic acid capsule may help the bacterium survive conditions outside the host. The chain is Co-chaperone protein DjlA from Escherichia coli O157:H7.